The following is a 618-amino-acid chain: 2-succinyl-5-enolpyruvyl-6-hydroxy-3-cyclohexene-1-carboxylate synthase (618 aa).

A disordered region spans residues 192–215; it reads DPVAERGRDGPYVDVTPGSPEPGD.

This sequence belongs to the TPP enzyme family. MenD subfamily. As to quaternary structure, homodimer. The cofactor is Mg(2+). It depends on Mn(2+) as a cofactor. Thiamine diphosphate is required as a cofactor.

It catalyses the reaction isochorismate + 2-oxoglutarate + H(+) = 5-enolpyruvoyl-6-hydroxy-2-succinyl-cyclohex-3-ene-1-carboxylate + CO2. The protein operates within quinol/quinone metabolism; 1,4-dihydroxy-2-naphthoate biosynthesis; 1,4-dihydroxy-2-naphthoate from chorismate: step 2/7. It participates in quinol/quinone metabolism; menaquinone biosynthesis. In terms of biological role, catalyzes the thiamine diphosphate-dependent decarboxylation of 2-oxoglutarate and the subsequent addition of the resulting succinic semialdehyde-thiamine pyrophosphate anion to isochorismate to yield 2-succinyl-5-enolpyruvyl-6-hydroxy-3-cyclohexene-1-carboxylate (SEPHCHC). In Halorubrum lacusprofundi (strain ATCC 49239 / DSM 5036 / JCM 8891 / ACAM 34), this protein is 2-succinyl-5-enolpyruvyl-6-hydroxy-3-cyclohexene-1-carboxylate synthase.